The primary structure comprises 341 residues: 33 kDa chaperonin (341 aa).

Disulfide bonds link Cys-245–Cys-247 and Cys-278–Cys-281.

This sequence belongs to the HSP33 family. In terms of processing, under oxidizing conditions two disulfide bonds are formed involving the reactive cysteines. Under reducing conditions zinc is bound to the reactive cysteines and the protein is inactive.

The protein localises to the cytoplasm. Its function is as follows. Redox regulated molecular chaperone. Protects both thermally unfolding and oxidatively damaged proteins from irreversible aggregation. Plays an important role in the bacterial defense system toward oxidative stress. This Thermus thermophilus (strain ATCC 27634 / DSM 579 / HB8) protein is 33 kDa chaperonin.